A 354-amino-acid chain; its full sequence is Selection and upkeep of intraepithelial T-cells protein 10 (354 aa).

A signal peptide spans 1 to 52 (MFLRTQMEQSQADIFALIKPHFGVMESSASYLPGFFMTFLLLQTTVLTQAMS). An Ig-like V-type domain is found at 53–141 (LDIQINIQVP…TNREKKRSVV (89 aa)). Residues 53–158 (LDIQINIQVP…SEYMSLMSNK (106 aa)) are Extracellular-facing. Cys71 and Cys125 are oxidised to a cystine. Asn129 carries N-linked (GlcNAc...) asparagine glycosylation. A helical transmembrane segment spans residues 159-179 (FSCPLTYLFIIIFLNCLKGML). At 180–209 (DFCCLKGKPVYFRELINKIKEVLNIKMRAC) the chain is on the cytoplasmic side. The helical transmembrane segment at 210 to 230 (CTLIWEFLLIVLYIAFLPFYL) threads the bilayer. At 231-252 (KFRSRASILDDAYPLHSNWLWD) the chain is on the extracellular side. A helical membrane pass occupies residues 253 to 273 (ICIVLSVLMIFFTGLSLFLLW). Over 274-354 (TLNCYGQMSY…RLDCSLNWKT (81 aa)) the chain is Cytoplasmic.

Belongs to the SKINT family. In terms of tissue distribution, expressed in skin and thymus.

The protein resides in the membrane. Its function is as follows. May act by engaging a cell surface molecule on immature T-cells in the embryonic thymus. This Mus musculus (Mouse) protein is Selection and upkeep of intraepithelial T-cells protein 10 (Skint10).